A 1036-amino-acid chain; its full sequence is Histidine kinase 3 (1036 aa).

Topologically, residues 1–8 (MSLFHVLG) are extracellular. Residues 9–29 (FGVKIGHLFWMLCCWFVSWFV) form a helical membrane-spanning segment. The Cytoplasmic portion of the chain corresponds to 30-94 (DNGIEDKSGL…VKFNKAWWRK (65 aa)). The helical transmembrane segment at 95 to 115 (LVVVWVVFWVLVSIWTFWYFS) threads the bilayer. Over 116–399 (SQAMEKRKET…CRFKQKPPWP (284 aa)) the chain is Extracellular. The CHASE domain occupies 163–389 (IPSAIDQRTF…GDPLRKHEMR (227 aa)). The helical transmembrane segment at 400–420 (VLSMVTSFGILVIALLVAHII) threads the bilayer. Over 421-1036 (HATVSRIHKV…FFNSPSDTES (616 aa)) the chain is Cytoplasmic. The region spanning 457–723 (TVSHEIRTPM…TFTFTAVFSN (267 aa)) is the Histidine kinase domain. His-460 is subject to Phosphohistidine; by autocatalysis. 2 consecutive Response regulatory domains span residues 746 to 865 (KAVV…QRGL) and 891 to 1028 (KILI…SRFF). Position 941 is a 4-aspartylphosphate (Asp-941).

Interacts with AHK2, AHK4, AHP1, AHP2, AHP3, AHP5 and At5g43560. Post-translationally, autophosphorylated predominantly on His residues. Activation probably requires a transfer of a phosphate group between a His in the transmitter domain and an Asp of the receiver domain. In terms of tissue distribution, mostly expressed in leaves and flowers, and, to a lower extent, in roots, stems, and siliques, especially in the vascular tissues. Present in seedlings.

It is found in the cell membrane. The protein localises to the endoplasmic reticulum membrane. The catalysed reaction is ATP + protein L-histidine = ADP + protein N-phospho-L-histidine.. With respect to regulation, activated by cytokinins to initiate phosphorelay signaling. This cytokinin-mediated activation is repressed by the trans-zeatin antagonists 6-(2-hydroxy-3-methylbenzylamino)purine (PI-55) and 6-(2,5-Dihydroxybenzylamino)purine (LGR-991). In terms of biological role, cytokinins (CK) receptor related to bacterial two-component regulators. Functions as a histidine kinase and transmits the stress signal to a downstream MAPK cascade. This protein undergoes an ATP-dependent autophosphorylation at a conserved histidine residue in the kinase core, and a phosphoryl group is then transferred to a conserved aspartate residue in the receiver domain. In the presence of cytokinin, feeds phosphate to phosphorelay-integrating histidine phosphotransfer protein (HPt) and activates subsequent cascade. Involved in meristems establishment in seedlings. Redundant negative regulator of drought and salt stress responses and abscisic acid (ABA) signaling. Together with AHK2, plays a negative regulatory role in cold stress signaling via inhibition of ABA response, occurring independently of the cold acclimation pathway. Redundant positive regulator of cytokinin signaling that regulates many developmental processes including seed germination, cell division, seed size, chlorophyll retention during leaf senescence, root repression and shoot promotion. Can interact with isoprenoid-type cytokinins trans-zeatin (tZ and tZR), cis-zeatin (cZ), dihydrozeatin (DZ), buta-2,3-dienyladenine (HA-8), penta-2,3-dienyladenine (HA-1), 4-methyl-penta-2,3-dienyladenine (HA-10), 4-hydroxy-2-butynyladenine (RM1), 2-propynyladenine (RM3), 2-butynyladenine (RM6), and cytokinin ribosides and ribotides. Together with AHK4, involved in the cytokinin-dependent responses to Pi starvation and sucrose stresses. Promotes cytokinin-mediated leaf longevity through a specific phosphorylation of the response regulator ARR2. Involved in alkamides (e.g. N-isobutyl decanamide) and N-acylethanolamides (NAE) signaling that control meristematic activity and differentiation processes during plant development. Contributes to vascular bundle formation and secondary growth in a cytokinin-dependent manner, probably by promoting the maintenance of mitotic activity and/or identity of procambial cells. Plays a role in the cytokinin-mediated repression of the iron uptake pathway. Required by the cytokinin-dependent flower development regulation pathway. The protein is Histidine kinase 3 (AHK3) of Arabidopsis thaliana (Mouse-ear cress).